The primary structure comprises 299 residues: Protease HtpX homolog (299 aa).

Transmembrane regions (helical) follow at residues 15 to 35 (ILLLVFFLLLALVGYAVGYLF) and 39 to 59 (GLGGLVIALIIGFIYALSMIF). Histidine 143 serves as a coordination point for Zn(2+). The active site involves glutamate 144. Histidine 147 lines the Zn(2+) pocket. 2 helical membrane passes run 158–178 (IAVALASAITMLSSMAGRMMW) and 198–218 (IIMLVVSLLAIVLAPLAATLV). Glutamate 227 provides a ligand contact to Zn(2+).

Belongs to the peptidase M48B family. Requires Zn(2+) as cofactor.

It localises to the cell membrane. In Streptococcus pneumoniae (strain Taiwan19F-14), this protein is Protease HtpX homolog.